Consider the following 317-residue polypeptide: Melanocyte-stimulating hormone receptor (317 aa).

The segment at Met1–His23 is disordered. At Met1–Glu37 the chain is on the extracellular side. Asn29 is a glycosylation site (N-linked (GlcNAc...) asparagine). Residues Val38–Ile63 traverse the membrane as a helical segment. The Cytoplasmic portion of the chain corresponds to Ala64–Pro72. The helical transmembrane segment at Met73–Leu93 threads the bilayer. The Extracellular portion of the chain corresponds to Glu94 to Asp118. The chain crosses the membrane as a helical span at residues Ile119–Val140. At Asp141–Arg163 the chain is on the cytoplasmic side. Residues Ala164 to Tyr183 traverse the membrane as a helical segment. Residues Asn184–Cys191 lie on the Extracellular side of the membrane. Residues Leu192–Leu211 traverse the membrane as a helical segment. Residues Ala212–Ala240 lie on the Cytoplasmic side of the membrane. The chain crosses the membrane as a helical span at residues Ala241 to Leu266. Residues Cys267–Asn279 are Extracellular-facing. The chain crosses the membrane as a helical span at residues Phe280–Phe300. Residues Arg301–Trp317 are Cytoplasmic-facing. A lipid anchor (S-palmitoyl cysteine) is attached at Cys315.

It belongs to the G-protein coupled receptor 1 family. Interacts with MGRN1, but does not undergo MGRN1-mediated ubiquitination; this interaction competes with GNAS-binding and thus inhibits agonist-induced cAMP production. Interacts with OPN3; the interaction results in a decrease in MC1R-mediated cAMP signaling and ultimately a decrease in melanin production in melanocytes.

It localises to the cell membrane. Functionally, receptor for MSH (alpha, beta and gamma) and ACTH. The activity of this receptor is mediated by G proteins which activate adenylate cyclase. Mediates melanogenesis, the production of eumelanin (black/brown) and phaeomelanin (red/yellow), via regulation of cAMP signaling in melanocytes. The chain is Melanocyte-stimulating hormone receptor (MC1R) from Vulpes vulpes (Red fox).